The following is a 303-amino-acid chain: MPAISMKELLEAGVHFGHQTKRWNPKMKEYIFGERNGIYIIDLQKTLKMFKDAARFVGEMAAQGKNVLFVGTKRQAQEAIAEEANRCQMYYVNQRWLGGLLTNMLTVQKSIKRLKELEAMASVEGGYAGRPKKEVIRLERERKHLDQNLSGIKDMPGLPDVLFVIDSNKEGIAVKEARRLGIPVVAIVDTNCDPDEVDWVIPGNDDALRAIRLFASKIADAVVEGRALATEQDFTADKIISDETPAEEGMMEYTEYVDPKYAEKIMAESLSMAEEPAPPSQRKGPASETAEPVAEPAVTESGS.

The tract at residues alanine 267–serine 303 is disordered.

This sequence belongs to the universal ribosomal protein uS2 family.

This chain is Small ribosomal subunit protein uS2, found in Solibacter usitatus (strain Ellin6076).